A 30-amino-acid polypeptide reads, in one-letter code: ATP-dependent Clp protease ATP-binding subunit ClpA homolog (30 aa).

This sequence belongs to the ClpA/ClpB family.

It is found in the plastid. Its subcellular location is the chloroplast. Its function is as follows. May interact with a ClpP-like protease involved in degradation of denatured proteins in the chloroplast. The polypeptide is ATP-dependent Clp protease ATP-binding subunit ClpA homolog (Pinus pinaster (Maritime pine)).